The chain runs to 230 residues: MKDAKELKLMTLEDVLSQIENGMTIGIGTGSTIELLIPQIAELIQQKNYTITGVCTSNKTAFLAKELAMNIVDVNDVEKIDLAIDGADEVDSALNLIKGGGGALFREKVIDEMADRFVVVVDESKLVNYLGETFALPVEVDKFNWYQVAKKIERTYDIHVSRRVNEDVPFITDNGNYILDCSLQNRIPAYELHEFLIHLTGVLETGYFLDIADQVIVGTQEGVKILNKET.

Substrate-binding positions include 29 to 32 (TGST), 85 to 88 (DGAD), and 98 to 101 (KGGG). Glu107 serves as the catalytic Proton acceptor. Lys125 is a substrate binding site.

Belongs to the ribose 5-phosphate isomerase family. As to quaternary structure, homodimer.

The catalysed reaction is aldehydo-D-ribose 5-phosphate = D-ribulose 5-phosphate. It participates in carbohydrate degradation; pentose phosphate pathway; D-ribose 5-phosphate from D-ribulose 5-phosphate (non-oxidative stage): step 1/1. Functionally, catalyzes the reversible conversion of ribose-5-phosphate to ribulose 5-phosphate. The protein is Ribose-5-phosphate isomerase A of Staphylococcus epidermidis (strain ATCC 35984 / DSM 28319 / BCRC 17069 / CCUG 31568 / BM 3577 / RP62A).